The chain runs to 956 residues: Isoleucine--tRNA ligase (956 aa).

The 'HIGH' region signature appears at 60–70; sequence PYANGHIHVGH. Residue E583 participates in L-isoleucyl-5'-AMP binding. A 'KMSKS' region motif is present at residues 624–628; it reads KMSKS. Residue K627 participates in ATP binding. C921, C924, C938, and C941 together coordinate Zn(2+).

The protein belongs to the class-I aminoacyl-tRNA synthetase family. IleS type 1 subfamily. As to quaternary structure, monomer. It depends on Zn(2+) as a cofactor.

It localises to the cytoplasm. The enzyme catalyses tRNA(Ile) + L-isoleucine + ATP = L-isoleucyl-tRNA(Ile) + AMP + diphosphate. In terms of biological role, catalyzes the attachment of isoleucine to tRNA(Ile). As IleRS can inadvertently accommodate and process structurally similar amino acids such as valine, to avoid such errors it has two additional distinct tRNA(Ile)-dependent editing activities. One activity is designated as 'pretransfer' editing and involves the hydrolysis of activated Val-AMP. The other activity is designated 'posttransfer' editing and involves deacylation of mischarged Val-tRNA(Ile). The polypeptide is Isoleucine--tRNA ligase (Aquifex aeolicus (strain VF5)).